Consider the following 375-residue polypeptide: F-box/kelch-repeat protein At4g39240 (375 aa).

Over residues 1–15 (MPFSAASSSSVSSIA) the composition is skewed to low complexity. Residues 1–27 (MPFSAASSSSVSSIAEEPPPKKQHDPS) are disordered. Positions 31-77 (SSYLLLLPDEIILNCLARLPKCYYPVISLVSKTFRRLIASPEIYVER) constitute an F-box domain. Kelch repeat units lie at residues 140–186 (EIYV…FFDG), 187–232 (KLYV…RSFA), and 275–321 (KIYT…GNLA).

This chain is F-box/kelch-repeat protein At4g39240, found in Arabidopsis thaliana (Mouse-ear cress).